The primary structure comprises 509 residues: MGLPWYRVHTVVLNDPGRLIAVHLMHTALVAGWAGSMALYELAVFDPSDPVLNPMWRQGMFVMPFMARLGVTDSWGGWSITGESVSNPGLWSLEGVALTHIVLSGMLFLAAIWHWVYWDLELFRDPRTGEPALDLPKIFGIHLLLSSLLCFGFGAFHVTGLFGPGMWVSDGYGVTGKVLPVAPAWGPEGFNPFNPGGVASHHIAAGTVGILAGVFHLTVRPPQRLYRALRMGNIETVLSSSISAVFFSAFITCGTMWYGSATTPIELFGPTRYQWDSGYFQQEIEKRVENAIADGAAPSEAWSRIPDKLAFYDYIGNNPAKGGLFRAGPMNKGDGVAEAWLGHPVFQDKEGRELSVRRMPAFFETFPVILVDKDGIIRADIPFRRAESKYSIEQVGVTASFYGGKLNGQVFNDAPSVKKYARKAQLGEVFEFDRTTLESDGVFRSSPRGWFTFGHANFALIFFFGHLWHGSRTIFRDVFAGIGAEVTEQVEFGAFQKLGDRSSKKQGAV.

6 helical membrane-spanning segments follow: residues 21 to 36, 101 to 115, 140 to 156, 203 to 218, 237 to 252, and 457 to 472; these read AVHL…WAGS, IVLS…IWHW, GIHL…FGAF, IAAG…FHLT, VLSS…AFIT, and NFAL…HGSR.

It belongs to the PsbB/PsbC family. PsbB subfamily. As to quaternary structure, PSII is composed of 1 copy each of membrane proteins PsbA, PsbB, PsbC, PsbD, PsbE, PsbF, PsbH, PsbI, PsbJ, PsbK, PsbL, PsbM, PsbT, PsbX, PsbY, PsbZ, Psb30/Ycf12, at least 3 peripheral proteins of the oxygen-evolving complex and a large number of cofactors. It forms dimeric complexes. Binds multiple chlorophylls. PSII binds additional chlorophylls, carotenoids and specific lipids. serves as cofactor.

Its subcellular location is the plastid. It is found in the chloroplast thylakoid membrane. One of the components of the core complex of photosystem II (PSII). It binds chlorophyll and helps catalyze the primary light-induced photochemical processes of PSII. PSII is a light-driven water:plastoquinone oxidoreductase, using light energy to abstract electrons from H(2)O, generating O(2) and a proton gradient subsequently used for ATP formation. This chain is Photosystem II CP47 reaction center protein, found in Porphyra purpurea (Red seaweed).